The primary structure comprises 250 residues: Prophage antitermination protein Q homolog QuuQ (250 aa).

The protein belongs to the phage antitermination Q type 2 family.

Its function is as follows. Positively regulate expression of some phage genes. Bacterial host RNA polymerase modified by antitermination proteins transcribes through termination sites that otherwise prevent expression of the regulated genes. This chain is Prophage antitermination protein Q homolog QuuQ (quuQ), found in Escherichia coli (strain K12).